We begin with the raw amino-acid sequence, 288 residues long: UDP-3-O-acyl-N-acetylglucosamine deacetylase (288 aa).

3 residues coordinate Zn(2+): His-79, His-236, and Asp-240. The active-site Proton donor is His-263.

This sequence belongs to the LpxC family. Zn(2+) is required as a cofactor.

The catalysed reaction is a UDP-3-O-[(3R)-3-hydroxyacyl]-N-acetyl-alpha-D-glucosamine + H2O = a UDP-3-O-[(3R)-3-hydroxyacyl]-alpha-D-glucosamine + acetate. It participates in glycolipid biosynthesis; lipid IV(A) biosynthesis; lipid IV(A) from (3R)-3-hydroxytetradecanoyl-[acyl-carrier-protein] and UDP-N-acetyl-alpha-D-glucosamine: step 2/6. Functionally, catalyzes the hydrolysis of UDP-3-O-myristoyl-N-acetylglucosamine to form UDP-3-O-myristoylglucosamine and acetate, the committed step in lipid A biosynthesis. This chain is UDP-3-O-acyl-N-acetylglucosamine deacetylase, found in Rickettsia prowazekii (strain Madrid E).